The primary structure comprises 160 residues: Endoribonuclease YbeY (160 aa).

Histidine 112, histidine 116, and histidine 122 together coordinate Zn(2+). A disordered region spans residues 141–160; the sequence is ELGHPDPYACDDEEPPSKEK.

It belongs to the endoribonuclease YbeY family. Requires Zn(2+) as cofactor.

It is found in the cytoplasm. Single strand-specific metallo-endoribonuclease involved in late-stage 70S ribosome quality control and in maturation of the 3' terminus of the 16S rRNA. The sequence is that of Endoribonuclease YbeY from Pseudomonas paraeruginosa (strain DSM 24068 / PA7) (Pseudomonas aeruginosa (strain PA7)).